A 523-amino-acid chain; its full sequence is Probable methylmalonate-semialdehyde/malonate-semialdehyde dehydrogenase [acylating], mitochondrial (523 aa).

The N-terminal 22 residues, 1 to 22 (MLSRLARVQPKCQQLAHFSTSK), are a transit peptide targeting the mitochondrion. NAD(+) contacts are provided by phenylalanine 175, lysine 199, and glutamate 202. Residue cysteine 307 is the Nucleophile of the active site. Residue glutamate 407 coordinates NAD(+).

It belongs to the aldehyde dehydrogenase family. Homodimer.

The protein localises to the mitochondrion. It carries out the reaction 2-methyl-3-oxopropanoate + NAD(+) + CoA + H2O = propanoyl-CoA + hydrogencarbonate + NADH + H(+). The enzyme catalyses 3-oxopropanoate + NAD(+) + CoA + H2O = hydrogencarbonate + acetyl-CoA + NADH + H(+). Probable malonate and methylmalonate semialdehyde dehydrogenase involved in the catabolism of valine, thymine, and compounds catabolized by way of beta-alanine, including uracil and cytidine. This is Probable methylmalonate-semialdehyde/malonate-semialdehyde dehydrogenase [acylating], mitochondrial (alh-8) from Caenorhabditis elegans.